A 219-amino-acid chain; its full sequence is Ribosomal RNA small subunit methyltransferase G (219 aa).

Positions 81, 86, and 150 each coordinate S-adenosyl-L-methionine.

It belongs to the methyltransferase superfamily. RNA methyltransferase RsmG family.

The protein resides in the cytoplasm. It carries out the reaction guanosine(527) in 16S rRNA + S-adenosyl-L-methionine = N(7)-methylguanosine(527) in 16S rRNA + S-adenosyl-L-homocysteine. Specifically methylates the N7 position of guanine in position 527 of 16S rRNA. The protein is Ribosomal RNA small subunit methyltransferase G of Magnetococcus marinus (strain ATCC BAA-1437 / JCM 17883 / MC-1).